A 237-amino-acid chain; its full sequence is Mitochondrial inner membrane protease atp23 (237 aa).

A compositionally biased stretch (low complexity) spans 1 to 19 (MSDSQPGSTSSTGGKSDSG). Positions 1–23 (MSDSQPGSTSSTGGKSDSGYIPG) are disordered. His136 is an a divalent metal cation binding site. Glu137 is an active-site residue. His140 is an a divalent metal cation binding site.

It belongs to the peptidase M76 family.

The protein localises to the mitochondrion inner membrane. Has a dual role in the assembly of mitochondrial ATPase. Acts as a protease that removes N-terminal residues of mitochondrial ATPase CF(0) subunit 6 at the intermembrane space side. Also involved in the correct assembly of the membrane-embedded ATPase CF(0) particle, probably mediating association of subunit 6 with the subunit 9 ring. The polypeptide is Mitochondrial inner membrane protease atp23 (atp23) (Neosartorya fischeri (strain ATCC 1020 / DSM 3700 / CBS 544.65 / FGSC A1164 / JCM 1740 / NRRL 181 / WB 181) (Aspergillus fischerianus)).